The sequence spans 67 residues: Large ribosomal subunit protein bL35 (67 aa).

It belongs to the bacterial ribosomal protein bL35 family.

The chain is Large ribosomal subunit protein bL35 from Sinorhizobium fredii (strain NBRC 101917 / NGR234).